The following is a 249-amino-acid chain: Putative NAD(+)--arginine ADP-ribosyltransferase Vis (249 aa).

An N-terminal signal peptide occupies residues 1 to 18 (MNTRFLLLLCCLSFTTFS). Positions 31–223 (EEEVTQLAED…IGVETVKASA (193 aa)) constitute a TR mART core domain. NAD(+)-binding positions include 68–80 (SISG…DYLR), 117–120 (RGTW), and E137. The active site involves R117. Catalysis depends on residues S142 and E191. Position 191 (E191) interacts with NAD(+).

It belongs to the Arg-specific ADP-ribosyltransferase family.

It is found in the secreted. It carries out the reaction L-arginyl-[protein] + NAD(+) = N(omega)-(ADP-D-ribosyl)-L-arginyl-[protein] + nicotinamide + H(+). A probable mono(ADP-ribosyl)transferase, it may ADP-ribosylate Arg in target protein(s). Upon expression in yeast cells causes cell death. This chain is Putative NAD(+)--arginine ADP-ribosyltransferase Vis, found in Vibrio splendidus (strain 12B01).